Consider the following 87-residue polypeptide: Small ribosomal subunit protein bS20 (87 aa).

This sequence belongs to the bacterial ribosomal protein bS20 family.

In terms of biological role, binds directly to 16S ribosomal RNA. The chain is Small ribosomal subunit protein bS20 from Clostridium beijerinckii (strain ATCC 51743 / NCIMB 8052) (Clostridium acetobutylicum).